A 294-amino-acid chain; its full sequence is MPVVTMRQLLNSGVHFGHQTRRWNPKMKRFILTERNGIYIIDLQQSLSYIDRAYEFVKATVAHGGTVLFVGTKKQAQEAIAEQSTRVGQPYVNHRWLGGMLTNFQTVAKRIQRMKELEEINFEDVASSGHTKKELLLLKRELTKLEGNLGGIRNLNKVPSTIWIVDTKKEHLAIDEAKKLNIPVVAILDTNCDPDEVDFPIPGNDDAIRSVNLLTRVIADAVAEGLIARNAKATGSAEGTAAEPLAEWERELLESSNTEAPVAETAAAEAPVADAAIEAPVAEEAKTTEADDTK.

Positions 254–294 are disordered; the sequence is ESSNTEAPVAETAAAEAPVADAAIEAPVAEEAKTTEADDTK. A compositionally biased stretch (low complexity) spans 259–282; that stretch reads EAPVAETAAAEAPVADAAIEAPVA. The span at 283 to 294 shows a compositional bias: basic and acidic residues; sequence EEAKTTEADDTK.

Belongs to the universal ribosomal protein uS2 family.

The polypeptide is Small ribosomal subunit protein uS2 (Renibacterium salmoninarum (strain ATCC 33209 / DSM 20767 / JCM 11484 / NBRC 15589 / NCIMB 2235)).